The chain runs to 267 residues: Heme-containing CO-sensing transcriptional regulator RcoM 1 (267 aa).

Residues 15-86 (RAETFQHKLE…KSRDKLRFLL (72 aa)) enclose the PAS domain. 2 residues coordinate heme: His74 and Met104. One can recognise an HTH LytTR-type domain in the interval 161 to 266 (IPVYRKNRVI…TAQLKELLGV (106 aa)).

Heme is required as a cofactor.

Its subcellular location is the cytoplasm. One-component, b-type heme-containing aerobic sensor and transcriptional regulator that responds to CO by activating the expression of the oxidation operon cox. This Paraburkholderia xenovorans (strain LB400) protein is Heme-containing CO-sensing transcriptional regulator RcoM 1 (rcoM1).